The following is a 304-amino-acid chain: Protein PagO (304 aa).

A run of 10 helical transmembrane segments spans residues 4–24 (VSIS…WLAM), 34–54 (VFAT…IAWL), 67–87 (LFQF…MIYG), 95–115 (LAAI…VLFL), 119–139 (AKLM…GILL), 150–170 (WQGI…YTQC), 180–200 (ITFN…TGWF), 214–234 (ILAT…CYFA), 246–266 (LVFL…YGYA), and 267–287 (ISTH…LTLV). EamA domains are found at residues 15–139 (LTWG…GILL) and 161–287 (LIHA…LTLV).

This sequence belongs to the EamA transporter family.

It is found in the cell membrane. In Salmonella typhimurium (strain LT2 / SGSC1412 / ATCC 700720), this protein is Protein PagO (pagO).